Here is a 508-residue protein sequence, read N- to C-terminus: MVTTPRLVSLLLLLALCAAAAGALRLPPDASFPGAQAERLIRALNLLPKDSSSSSGRHGARVGEGNEDVAPGQLLERRVTLPGLPEGVADLGHHAGYYRLPNTHDARMFYFFFESRGKKEDPVVIWLTGGPGCSSELAVFYENGPFTIANNMSLVWNKFGWDKISNIIFVDQPTGTGFSYSSDDRDTRHDETGVSNDLYDFLQVFFKKHPEFIKNDFFITGESYAGHYIPAFASRVHQGNKKNEGTHINLKGFAIGNGLTDPAIQYKAYTDYALEMNLIQKADYERINKFIPPCEFAIKLCGTNGKASCMAAYMVCNTIFNSIMKLVGTKNYYDVRKECEGKLCYDFSNLEKFFGDKAVRQAIGVGDIEFVSCSTSVYQAMLTDWMRNLEVGIPALLEDGINVLIYAGEYDLICNWLGNSRWVHSMEWSGQKDFAKTAESSFLVDDAQAGVLKSHGALSFLKVHNAGHMVPMDQPKAALEMLRRFTQGKLKEAVPEEESSTTSFYAAM.

Positions 1 to 19 are cleaved as a signal peptide; it reads MVTTPRLVSLLLLLALCAA. The propeptide occupies 20-80; the sequence is AAGALRLPPD…PGQLLERRVT (61 aa). Positions 48-67 are disordered; that stretch reads PKDSSSSSGRHGARVGEGNE. L81 carries the post-translational modification Blocked amino end (Leu). 3 cysteine pairs are disulfide-bonded: C133/C373, C301/C316, and C339/C344. N-linked (GlcNAc...) asparagine glycosylation is present at N151. S223 is an active-site residue. The active site involves D411. C414 contributes to the substrate binding site. H468 is a catalytic residue. The propeptide occupies 492-508; sequence EAVPEEESSTTSFYAAM.

The protein belongs to the peptidase S10 family. As to quaternary structure, monomer.

The protein resides in the secreted. It catalyses the reaction Release of a C-terminal amino acid with broad specificity.. Its activity is regulated as follows. Inhibited by mercuric ions. This chain is Serine carboxypeptidase 3 (CBP3), found in Hordeum vulgare (Barley).